The following is a 331-amino-acid chain: Phosphoribosylformylglycinamidine cyclo-ligase (331 aa).

It belongs to the AIR synthase family.

It localises to the cytoplasm. It catalyses the reaction 2-formamido-N(1)-(5-O-phospho-beta-D-ribosyl)acetamidine + ATP = 5-amino-1-(5-phospho-beta-D-ribosyl)imidazole + ADP + phosphate + H(+). It functions in the pathway purine metabolism; IMP biosynthesis via de novo pathway; 5-amino-1-(5-phospho-D-ribosyl)imidazole from N(2)-formyl-N(1)-(5-phospho-D-ribosyl)glycinamide: step 2/2. The protein is Phosphoribosylformylglycinamidine cyclo-ligase of Clostridium botulinum (strain 657 / Type Ba4).